The sequence spans 438 residues: Aspartate--tRNA(Asp) ligase (438 aa).

An L-aspartate-binding site is contributed by E170. Positions 192 to 195 (QLYK) are aspartate. R214 is a binding site for L-aspartate. ATP is bound by residues 214-216 (RAE), 222-224 (RHL), and E361. Residues E361 and S364 each coordinate Mg(2+). Positions 364 and 368 each coordinate L-aspartate. 409–412 (GAER) contributes to the ATP binding site.

It belongs to the class-II aminoacyl-tRNA synthetase family. Type 2 subfamily. Homodimer. Mg(2+) is required as a cofactor.

The protein resides in the cytoplasm. The enzyme catalyses tRNA(Asp) + L-aspartate + ATP = L-aspartyl-tRNA(Asp) + AMP + diphosphate. Catalyzes the attachment of L-aspartate to tRNA(Asp) in a two-step reaction: L-aspartate is first activated by ATP to form Asp-AMP and then transferred to the acceptor end of tRNA(Asp). The sequence is that of Aspartate--tRNA(Asp) ligase from Pyrococcus horikoshii (strain ATCC 700860 / DSM 12428 / JCM 9974 / NBRC 100139 / OT-3).